The sequence spans 258 residues: Type III pantothenate kinase (258 aa).

An ATP-binding site is contributed by 6–13 (DVGNTNTV). Substrate contacts are provided by residues Tyr-100 and 107 to 110 (GADR). Asp-109 (proton acceptor) is an active-site residue. Residue Asp-129 participates in K(+) binding. Residue Thr-132 participates in ATP binding. A substrate-binding site is contributed by Thr-184.

Belongs to the type III pantothenate kinase family. In terms of assembly, homodimer. NH4(+) is required as a cofactor. It depends on K(+) as a cofactor.

The protein localises to the cytoplasm. The catalysed reaction is (R)-pantothenate + ATP = (R)-4'-phosphopantothenate + ADP + H(+). It functions in the pathway cofactor biosynthesis; coenzyme A biosynthesis; CoA from (R)-pantothenate: step 1/5. Its function is as follows. Catalyzes the phosphorylation of pantothenate (Pan), the first step in CoA biosynthesis. In Geobacillus thermodenitrificans (strain NG80-2), this protein is Type III pantothenate kinase.